Reading from the N-terminus, the 276-residue chain is Shikimate dehydrogenase (NADP(+)) (276 aa).

Residues 15–17 (SKS) and T62 contribute to the shikimate site. Catalysis depends on K66, which acts as the Proton acceptor. E78 provides a ligand contact to NADP(+). Shikimate contacts are provided by N87 and D103. NADP(+) is bound by residues 128–132 (GAGGA) and I217. A shikimate-binding site is contributed by Y219. G240 contacts NADP(+).

It belongs to the shikimate dehydrogenase family. In terms of assembly, homodimer.

It catalyses the reaction shikimate + NADP(+) = 3-dehydroshikimate + NADPH + H(+). Its pathway is metabolic intermediate biosynthesis; chorismate biosynthesis; chorismate from D-erythrose 4-phosphate and phosphoenolpyruvate: step 4/7. Involved in the biosynthesis of the chorismate, which leads to the biosynthesis of aromatic amino acids. Catalyzes the reversible NADPH linked reduction of 3-dehydroshikimate (DHSA) to yield shikimate (SA). In Lysinibacillus sphaericus (strain C3-41), this protein is Shikimate dehydrogenase (NADP(+)).